Here is a 127-residue protein sequence, read N- to C-terminus: Small ribosomal subunit protein bS6 (127 aa).

Positions 101–127 are disordered; the sequence is PMMKEEKARDLLQGAKADAPAEQPAAA. Positions 115–127 are enriched in low complexity; sequence AKADAPAEQPAAA.

Belongs to the bacterial ribosomal protein bS6 family.

In terms of biological role, binds together with bS18 to 16S ribosomal RNA. This chain is Small ribosomal subunit protein bS6, found in Thiobacillus denitrificans (strain ATCC 25259 / T1).